A 341-amino-acid chain; its full sequence is MTCTILVGGQWGDEGKGKCITYFCTQDKPEIIARAGVGPNAGHSVEFNGEKYGLRLTPSGFFNKEARLLIGAGVLVNPEVFEHELEYLSKYAVEGRTFMDANCAIITDKHTKQDKDSAYLSKKIGTTGSGCGPANADRINRTIDYAKDVPELEKYITDVPSEINKAIDEGKDVFIEGSQGFGLSLYYGTYPYVTSKDTCASTAAADVGVGPTKVDEVIVIFKSYITRVGEGPFPTEISPEEAEKMGIEEYGVVTGRKRRVGLFDKDFAKRSCMINGATQIALTCIDRLYPECAKVNKYEDLSQEARDYIEDIEENVGVPITIISTGPDLADTIDLRNEKLN.

Residues 12 to 18 (GDEGKGK) and 42 to 44 (GHS) contribute to the GTP site. The Proton acceptor role is filled by Asp-13. Mg(2+) is bound by residues Asp-13 and Gly-42. Residues 13–16 (DEGK), 40–43 (NAGH), Thr-127, Arg-141, Gln-179, Thr-194, and Arg-256 each bind IMP. The active-site Proton donor is the His-43. A substrate-binding site is contributed by 252–258 (VVTGRKR). Residues Arg-258, 284-286 (CID), and 324-326 (STG) each bind GTP.

The protein belongs to the adenylosuccinate synthetase family. As to quaternary structure, homodimer. It depends on Mg(2+) as a cofactor.

Its subcellular location is the cytoplasm. It catalyses the reaction IMP + L-aspartate + GTP = N(6)-(1,2-dicarboxyethyl)-AMP + GDP + phosphate + 2 H(+). It functions in the pathway purine metabolism; AMP biosynthesis via de novo pathway; AMP from IMP: step 1/2. In terms of biological role, plays an important role in the de novo pathway of purine nucleotide biosynthesis. Catalyzes the first committed step in the biosynthesis of AMP from IMP. The chain is Adenylosuccinate synthetase from Methanosphaera stadtmanae (strain ATCC 43021 / DSM 3091 / JCM 11832 / MCB-3).